The following is a 214-amino-acid chain: Adenylate kinase (214 aa).

Position 10–15 (10–15 (GAGKGT)) interacts with ATP. The tract at residues 30–59 (STGDMLRAAVKSGSELGKQAKDIMDAGKLV) is NMP. Residues Thr-31, Arg-36, 57–59 (KLV), 85–88 (GFPR), and Gln-92 contribute to the AMP site. The interval 122 to 159 (GRRVHAPSGRVYHVKFNPPKVEGKDDVTGEELTTRKDD) is LID. ATP is bound by residues Arg-123 and 132 to 133 (VY). Arg-156 and Arg-167 together coordinate AMP. The residue at position 192 (Lys-192) is an N6-acetyllysine. An ATP-binding site is contributed by Lys-200.

This sequence belongs to the adenylate kinase family. In terms of assembly, monomer.

Its subcellular location is the cytoplasm. The enzyme catalyses AMP + ATP = 2 ADP. Its pathway is purine metabolism; AMP biosynthesis via salvage pathway; AMP from ADP: step 1/1. Catalyzes the reversible transfer of the terminal phosphate group between ATP and AMP. Plays an important role in cellular energy homeostasis and in adenine nucleotide metabolism. This Escherichia coli O8 (strain IAI1) protein is Adenylate kinase.